The sequence spans 3848 residues: Intermembrane lipid transfer protein tipC (3848 aa).

The Chorein N-terminal domain occupies 4 to 112 (HIAASVLTKY…KFQDEKQAKL (109 aa)). Disordered stretches follow at residues 243–268 (IKKEDSGKQQQQQQQQQGEEQDDEIE), 450–481 (LKLQQQQQQQQQNLNKISPTTTTTPSTSTGGG), 966–985 (QQLQPQQKQQSPPLISSPPL), 1174–1219 (KNNQ…NNNS), 1326–1345 (ERKLNNKTSPTTPSSSGVST), 1907–1926 (ENINNNNNNNLTTSTTTTTT), 2024–2047 (DDYNDDNYNSNGNNNNNNSNNQLP), 2209–2290 (IKPA…NKNL), 2330–2353 (FNPKFSSSSSSSQQQQQQPLSPLL), 2509–2541 (KQLNNQLQQQSNNNNNNNNNNNNTNSNNSNLLG), 3209–3228 (GITNDPNNPNNPNNNPNNND), and 3310–3342 (INQQPNQQSSSPQSTNTTTTTTTNTTTTNNTTQ). 2 stretches are compositionally biased toward low complexity: residues 251–260 (QQQQQQQQQG) and 452–477 (LQQQQQQQQQNLNKISPTTTTTPSTS). Residues 1175 to 1190 (NNQNNNQNNNQNNNQN) show a composition bias toward low complexity. The span at 1191–1200 (INESSPTVFI) shows a compositional bias: polar residues. Residues 1202-1211 (SPPPPPPPPL) show a composition bias toward pro residues. Residues 1333–1345 (TSPTTPSSSGVST) show a composition bias toward low complexity. 3 stretches are compositionally biased toward low complexity: residues 2029–2044 (DNYNSNGNNNNNNSNN), 2217–2289 (NNNN…NNKN), and 2335–2353 (SSSSSSSQQQQQQPLSPLL). Low complexity-rich tracts occupy residues 3212–3228 (NDPNNPNNPNNNPNNND) and 3311–3342 (NQQPNQQSSSPQSTNTTTTTTTNTTTTNNTTQ).

Belongs to the VPS13 family.

It is found in the membrane. Mediates the transfer of lipids between membranes at organelle contact sites. This Dictyostelium discoideum (Social amoeba) protein is Intermembrane lipid transfer protein tipC (tipC).